We begin with the raw amino-acid sequence, 160 residues long: Large ribosomal subunit protein eL21 (160 aa).

Basic and acidic residues-rich tracts occupy residues 112–123 (NDQKKKEAKEKG) and 136–145 (REAHFVRTNG). The segment at 112-145 (NDQKKKEAKEKGTWVQLKRQPAPPREAHFVRTNG) is disordered.

The protein belongs to the eukaryotic ribosomal protein eL21 family. Component of the large ribosomal subunit.

The protein localises to the cytoplasm. It is found in the cytosol. It localises to the endoplasmic reticulum. Functionally, component of the large ribosomal subunit. The ribosome is a large ribonucleoprotein complex responsible for the synthesis of proteins in the cell. In Oryctolagus cuniculus (Rabbit), this protein is Large ribosomal subunit protein eL21 (RPL21).